The primary structure comprises 343 residues: S-adenosylmethionine:tRNA ribosyltransferase-isomerase (343 aa).

The protein belongs to the QueA family. Monomer.

Its subcellular location is the cytoplasm. The enzyme catalyses 7-aminomethyl-7-carbaguanosine(34) in tRNA + S-adenosyl-L-methionine = epoxyqueuosine(34) in tRNA + adenine + L-methionine + 2 H(+). It functions in the pathway tRNA modification; tRNA-queuosine biosynthesis. Transfers and isomerizes the ribose moiety from AdoMet to the 7-aminomethyl group of 7-deazaguanine (preQ1-tRNA) to give epoxyqueuosine (oQ-tRNA). The protein is S-adenosylmethionine:tRNA ribosyltransferase-isomerase of Dehalococcoides mccartyi (strain CBDB1).